We begin with the raw amino-acid sequence, 1331 residues long: DNA-directed RNA polymerase subunit beta' (1331 aa).

4 residues coordinate Zn(2+): cysteine 220, cysteine 293, cysteine 300, and cysteine 303. Disordered stretches follow at residues 1236–1257 and 1294–1331; these read DFVD…TNDN and ISGD…MKDQ. The segment covering 1243-1257 has biased composition (polar residues); sequence SRSPNGYSNVVTNDN.

The protein belongs to the RNA polymerase beta' chain family. RpoC2 subfamily. In terms of assembly, in cyanobacteria the RNAP catalytic core is composed of 2 alpha, 1 beta, 1 beta', 1 gamma and 1 omega subunit. When a sigma factor is associated with the core the holoenzyme is formed, which can initiate transcription. Zn(2+) is required as a cofactor.

The enzyme catalyses RNA(n) + a ribonucleoside 5'-triphosphate = RNA(n+1) + diphosphate. DNA-dependent RNA polymerase catalyzes the transcription of DNA into RNA using the four ribonucleoside triphosphates as substrates. The sequence is that of DNA-directed RNA polymerase subunit beta' from Picosynechococcus sp. (strain ATCC 27264 / PCC 7002 / PR-6) (Agmenellum quadruplicatum).